The primary structure comprises 147 residues: Large ribosomal subunit protein bL9 (147 aa).

The protein belongs to the bacterial ribosomal protein bL9 family.

Functionally, binds to the 23S rRNA. This Gemmatimonas aurantiaca (strain DSM 14586 / JCM 11422 / NBRC 100505 / T-27) protein is Large ribosomal subunit protein bL9.